A 243-amino-acid chain; its full sequence is Geranylgeranylglyceryl phosphate synthase (243 aa).

D29 and S58 together coordinate Mg(2+). Residues 178–184 (YLEAGSG), 209–210 (GG), and 231–232 (GT) each bind sn-glycerol 1-phosphate.

It belongs to the GGGP/HepGP synthase family. Group II subfamily. Homodimer. Mg(2+) is required as a cofactor.

It carries out the reaction sn-glycerol 1-phosphate + (2E,6E,10E)-geranylgeranyl diphosphate = sn-3-O-(geranylgeranyl)glycerol 1-phosphate + diphosphate. Functionally, prenyltransferase that catalyzes the transfer of the geranylgeranyl moiety of geranylgeranyl diphosphate (GGPP) to the C3 hydroxyl of sn-glycerol-1-phosphate (G1P). This chain is Geranylgeranylglyceryl phosphate synthase, found in Flavobacterium johnsoniae (strain ATCC 17061 / DSM 2064 / JCM 8514 / BCRC 14874 / CCUG 350202 / NBRC 14942 / NCIMB 11054 / UW101) (Cytophaga johnsonae).